Reading from the N-terminus, the 433-residue chain is Mitochondrial inner membrane protein OXA1L (433 aa).

Topologically, residues 1 to 108 (MARNLVCGRW…QCATEPSFTE (108 aa)) are mitochondrial intermembrane. The helical transmembrane segment at 109 to 129 (LGLGSYTPVGLIQNLLEYIHV) threads the bilayer. Over 130–134 (DLGLP) the chain is Mitochondrial matrix. Residues 135–155 (WWGAIATCTVLARCLVFPLIV) form a helical membrane-spanning segment. Residues 156 to 207 (KGQREAAKIHNHMPEMQKFSARIREAKLAGDQAEFYKATIEMTRYQKKHDIK) are Mitochondrial intermembrane-facing. Residues 208 to 228 (LLRPLILPLTQAPVFISFFIA) traverse the membrane as a helical segment. Over 229–255 (LREMANLPVPSLQTGGLWWFQDLTVSD) the chain is Mitochondrial matrix. Residues 256 to 276 (PIYVLPLVVTATMWCVLELGA) traverse the membrane as a helical segment. The Mitochondrial intermembrane portion of the chain corresponds to 277-293 (ETGVQSNDLQFMRNIIR). Residues 294-314 (VMPLVVLPVTIHFPSAVFMYW) form a helical membrane-spanning segment. Residues 315–433 (LSSNVFSLCQ…AKKPWQDTLG (119 aa)) lie on the Mitochondrial matrix side of the membrane. At Ser359 the chain carries Phosphoserine. 2 positions are modified to phosphothreonine: Thr395 and Thr397. The disordered stretch occupies residues 397–433 (THNPLLQHDPSHPPKAPNSNNSSIKANAKKPWQDTLG). Residues 413–426 (PNSNNSSIKANAKK) show a composition bias toward low complexity.

Belongs to the OXA1/ALB3/YidC family. As to quaternary structure, monomer; predominantly monomeric at low salt concentrations. Homooligomer; predominantly homooligomeric at high salt concentrations. Associates with the mitochondrial ribosome. Associates preferentially as a dimer with the large ribosomal subunit 39S of the mitochondrial ribosome. Interacts with OXA1L; promoting cotranslational quality control in mitochondria.

The protein localises to the mitochondrion inner membrane. Its function is as follows. Mitochondrial membrane insertase that mediates the cotranslational insertion of integral membrane proteins into the mitochondrial inner membrane. Essential for the activity and assembly of cytochrome oxidase. Required for the correct biogenesis of ATP synthase and complex I in mitochondria. The sequence is that of Mitochondrial inner membrane protein OXA1L (Oxa1l) from Mus musculus (Mouse).